We begin with the raw amino-acid sequence, 346 residues long: MIELKNVSKVFTTKKGNVEALKSTSLQVKKGEVFGIIGYSGAGKSTLIRCVNLLEKPTTGNIIVNEQDLTTLSTKELAKARQKIGMIFQGFNLLKTVTVYENIALPLRLAGVPKLEIEKRVEKYLRIVDLFNRKDAYPSELSGGQKQRVAIARALSHEPEVLLSDEATSALDPETTDSILDLLLKINEEIGITILLITHEMNVIQRICDRVAVMEHGAVIESGTVKEIFTNPQHVTTKKFVNSAFAAKIPAEVQKELQRTGEIVTLSFIGNSSGEPALAIATKRFQVYPNILSGNITQLKHEAYGKLVIHMQGEKNEVDRALSFLQEQGIIVEGGRTDYGKQVLFG.

The 240-residue stretch at 2 to 241 (IELKNVSKVF…PQHVTTKKFV (240 aa)) folds into the ABC transporter domain. 38 to 45 (GYSGAGKS) contacts ATP.

It belongs to the ABC transporter superfamily. Methionine importer (TC 3.A.1.24) family. As to quaternary structure, the complex is composed of two ATP-binding proteins (MetN), two transmembrane proteins (MetI) and a solute-binding protein (MetQ).

The protein localises to the cell membrane. It catalyses the reaction L-methionine(out) + ATP + H2O = L-methionine(in) + ADP + phosphate + H(+). The enzyme catalyses D-methionine(out) + ATP + H2O = D-methionine(in) + ADP + phosphate + H(+). Functionally, part of the ABC transporter complex MetNIQ involved in methionine import. Responsible for energy coupling to the transport system. This chain is Methionine import ATP-binding protein MetN 1, found in Bacillus cereus (strain ZK / E33L).